A 380-amino-acid chain; its full sequence is Tryptophan 2,3-dioxygenase (380 aa).

Residues 57-61 (FIITH) and R128 each bind substrate. H313 serves as a coordination point for heme. Substrate is bound at residue T328.

This sequence belongs to the tryptophan 2,3-dioxygenase family. In terms of assembly, homotetramer. Dimer of dimers. Heme serves as cofactor.

The enzyme catalyses L-tryptophan + O2 = N-formyl-L-kynurenine. The protein operates within amino-acid degradation; L-tryptophan degradation via kynurenine pathway; L-kynurenine from L-tryptophan: step 1/2. It functions in the pathway pigment biosynthesis; ommochrome biosynthesis. Its function is as follows. Heme-dependent dioxygenase that catalyzes the oxidative cleavage of the L-tryptophan (L-Trp) pyrrole ring and converts L-tryptophan to N-formyl-L-kynurenine. Catalyzes the oxidative cleavage of the indole moiety. This Drosophila persimilis (Fruit fly) protein is Tryptophan 2,3-dioxygenase.